Here is a 351-residue protein sequence, read N- to C-terminus: Ion-translocating oxidoreductase complex subunit D (351 aa).

4 helical membrane-spanning segments follow: residues 18 to 38 (IMLLVILACIPGIIAQTYFFG), 40 to 60 (GSLIQVMLAMITALLAEGAVL), 87 to 107 (LPPLAPWWMIVLGTLFAIVIA), and 121 to 141 (PAMVGYVVLLISFPVQMTSWL). At threonine 185 the chain carries FMN phosphoryl threonine. 5 helical membrane passes run 211 to 231 (VLAGLGWQWVNIGFLVGGLLL), 241 to 261 (IPVSFLLALGGCAAVSWMIAP), 264 to 284 (FASPMLHLFSGATMLGAFFIA), 298 to 318 (LIFGALIGILVWLIRVYGGYP), and 320 to 340 (GVAFAVLLANITVPLIDHYTQ).

It belongs to the NqrB/RnfD family. As to quaternary structure, the complex is composed of six subunits: RnfA, RnfB, RnfC, RnfD, RnfE and RnfG. The cofactor is FMN.

Its subcellular location is the cell inner membrane. Functionally, part of a membrane-bound complex that couples electron transfer with translocation of ions across the membrane. This chain is Ion-translocating oxidoreductase complex subunit D, found in Yersinia pseudotuberculosis serotype I (strain IP32953).